The chain runs to 202 residues: MIKLTPRQAEILGFIKRCLEDNGFPPTRAEIAQELGFKSPNAAEEHLKALARKGAIEMTPGASRGIRIPGFEARPDESSLPVIGRVAAGAPILAQQHIEESCNINPSFFHPSANYLLRVHGMSMKDVGILDGDLLAVHTTREARNGQIVVARIGDEVTVKRFKREGSKVWLLAENPDFAPIEVDLKDQELVIEGLSVGVIRR.

Residues Arg-28–Lys-48 constitute a DNA-binding region (H-T-H motif). Catalysis depends on for autocatalytic cleavage activity residues Ser-123 and Lys-160.

It belongs to the peptidase S24 family. As to quaternary structure, homodimer.

The catalysed reaction is Hydrolysis of Ala-|-Gly bond in repressor LexA.. Represses a number of genes involved in the response to DNA damage (SOS response), including recA and lexA. In the presence of single-stranded DNA, RecA interacts with LexA causing an autocatalytic cleavage which disrupts the DNA-binding part of LexA, leading to derepression of the SOS regulon and eventually DNA repair. This is LexA repressor 1 from Pseudomonas syringae pv. tomato (strain ATCC BAA-871 / DC3000).